Reading from the N-terminus, the 366-residue chain is Chorismate synthase (366 aa).

NADP(+) is bound by residues Arg-48 and Arg-54. FMN contacts are provided by residues 125–127, 238–239, Gly-278, 293–297, and Arg-319; these read RSS, NA, and KPTSS.

Belongs to the chorismate synthase family. Homotetramer. FMNH2 is required as a cofactor.

The enzyme catalyses 5-O-(1-carboxyvinyl)-3-phosphoshikimate = chorismate + phosphate. It functions in the pathway metabolic intermediate biosynthesis; chorismate biosynthesis; chorismate from D-erythrose 4-phosphate and phosphoenolpyruvate: step 7/7. Functionally, catalyzes the anti-1,4-elimination of the C-3 phosphate and the C-6 proR hydrogen from 5-enolpyruvylshikimate-3-phosphate (EPSP) to yield chorismate, which is the branch point compound that serves as the starting substrate for the three terminal pathways of aromatic amino acid biosynthesis. This reaction introduces a second double bond into the aromatic ring system. This Burkholderia ambifaria (strain MC40-6) protein is Chorismate synthase.